Here is a 488-residue protein sequence, read N- to C-terminus: MSTLYIAGAWQAGQGELFHSLNPVTLHVLWSGQGATAEQVDHAVQAARQAFPAWALLSLDQRIAVLDAFAVSLKAHADELANCIGEETGKPLWESATEVTSMVNKIAISVQSYRERTGEKSAPLGDATAVLRHKPHGVVAVFGPYNFPGHLPNGHIVPALLAGNTVLFKPSELTPKVAELTVKCWIEAGLPAGVLNLLQGGRETGIALAANPGIDGLFFTGSSRTGNALHQQFAGRPDKILALEMGGNNPLVVDQVQDIDAAVYTIIQSAFISAGQRCTCARRLLVPEGDWGDALLARLVAVSATLDVGAFDQQPAPFMGSVISLEAARALLDAQRHLLANGAVTLLEMRQPQPGAALLTPGIVDVSAVANRPDVELFGPLLQVVRYAGFDAAIAEANATQYGLAAGLLSDSEARYQQFWLQSRAGIVNWNKQLTGAASSAPFGGVGASGNHRASAYYAADYCAYPVASLETGSLTLPATLTPGVRLS.

221–226 (GSSRTG) is a binding site for NAD(+). Residues Glu244 and Cys278 contribute to the active site.

Belongs to the aldehyde dehydrogenase family. AstD subfamily.

The catalysed reaction is N-succinyl-L-glutamate 5-semialdehyde + NAD(+) + H2O = N-succinyl-L-glutamate + NADH + 2 H(+). It functions in the pathway amino-acid degradation; L-arginine degradation via AST pathway; L-glutamate and succinate from L-arginine: step 4/5. In terms of biological role, catalyzes the NAD-dependent reduction of succinylglutamate semialdehyde into succinylglutamate. The chain is N-succinylglutamate 5-semialdehyde dehydrogenase from Pseudomonas syringae pv. tomato (strain ATCC BAA-871 / DC3000).